The following is a 170-amino-acid chain: Ribosome maturation factor RimM (170 aa).

A PRC barrel domain is found at 98–170 (PDEYYWVDLE…LIVVDWDPDF (73 aa)).

It belongs to the RimM family. In terms of assembly, binds ribosomal protein uS19.

It localises to the cytoplasm. Functionally, an accessory protein needed during the final step in the assembly of 30S ribosomal subunit, possibly for assembly of the head region. Essential for efficient processing of 16S rRNA. May be needed both before and after RbfA during the maturation of 16S rRNA. It has affinity for free ribosomal 30S subunits but not for 70S ribosomes. The chain is Ribosome maturation factor RimM from Xanthomonas oryzae pv. oryzae (strain MAFF 311018).